We begin with the raw amino-acid sequence, 401 residues long: Leucine aminopeptidase 1 (401 aa).

Residues 1–18 (MKVAKASLLTILAHSVSA) form the signal peptide. The propeptide occupies 19–87 (RFLAEDEINR…GATRLRTKTK (69 aa)). Asn-179 carries N-linked (GlcNAc...) asparagine glycosylation. Residues His-187, Asp-206, Glu-245, and Asp-272 each contribute to the Zn(2+) site. Cys-321 and Cys-325 form a disulfide bridge. His-354 is a Zn(2+) binding site.

It belongs to the peptidase M28 family. M28E subfamily. Monomer. Zn(2+) serves as cofactor.

It localises to the secreted. Its function is as follows. Extracellular aminopeptidase that allows assimilation of proteinaceous substrates. This Colletotrichum graminicola (strain M1.001 / M2 / FGSC 10212) (Maize anthracnose fungus) protein is Leucine aminopeptidase 1 (LAP1).